The sequence spans 288 residues: Type II iodothyronine deiodinase (288 aa).

Topologically, residues 1-5 are lumenal; that stretch reads MPHVN. Residues 6 to 26 form a helical; Signal-anchor for type III membrane protein membrane-spanning segment; the sequence is LLVVLLILPGVFSNCLFLALY. The Cytoplasmic segment spans residues 27–288; the sequence is DAVSFLRRAL…SFLESVKASR (262 aa). The segment at 99-130 is disordered; that stretch reads SCAASSSSSHETPTPRTTAEAAATVTTSTTTT. U160 is an active-site residue. Residue U160 is a non-standard amino acid, selenocysteine.

It belongs to the iodothyronine deiodinase family. Predominantly monomer. Can form homodimers but homodimerization is not essential for enzyme activity. In terms of tissue distribution, expressed in intestine, liver, kidney and brain of immediately premetamorphic larvae, of larvae in all stages of metamorphosis and of parasitic feeding juveniles. In immediately premetamorphic larvae, levels are significantly higher in intestine and liver than in kidney and brain.

It is found in the endoplasmic reticulum membrane. It catalyses the reaction 3,3',5-triiodo-L-thyronine + iodide + A + H(+) = L-thyroxine + AH2. It carries out the reaction 3,3'-diiodo-L-thyronine + iodide + A + H(+) = 3,3',5'-triiodo-L-thyronine + AH2. The catalysed reaction is 3'-iodo-L-thyronine + iodide + A + H(+) = 3',5'-diiodo-L-thyronine + AH2. The enzyme catalyses 3,3'-diiodothyronamine + iodide + A + H(+) = 3,3',5'-triiodothyronamine + AH2. It catalyses the reaction 3'-iodothyronamine + iodide + A + H(+) = 3',5'-diiodothyronamine + AH2. Functionally, plays a crucial role in the metabolism of thyroid hormones (TH) and has specific roles in TH activation and inactivation by deiodination. Catalyzes the deiodination of L-thyroxine (T4) to 3,5,3'-triiodothyronine (T3), 3,3',5'-triiodothyronine (rT3) to 3,3'-diiodothyronine (3,3'-T2) and 3',5'-diiodothyronine (3',5'-T2) to 3'-monoiodothyronine (3'-T1) via outer-ring deiodination (ORD). Catalyzes the phenolic ring deiodinations of 3,3',5'-triiodothyronamine and 3',5'- diiodothyronamine. The polypeptide is Type II iodothyronine deiodinase (Petromyzon marinus (Sea lamprey)).